The chain runs to 578 residues: ATP-dependent RNA helicase CHR1 (578 aa).

Residues Met-1–Ile-95 are disordered. Composition is skewed to basic and acidic residues over residues Glu-44–His-53 and Asn-78–Glu-94. A Q motif motif is present at residues Asp-131–Cys-159. The Helicase ATP-binding domain maps to Ile-162 to Ile-339. Ala-175–Thr-182 lines the ATP pocket. Residues Asp-286 to Asp-289 carry the DEAD box motif. Residues Thr-350–Gly-514 enclose the Helicase C-terminal domain. Composition is skewed to basic and acidic residues over residues Ser-517–Arg-531 and Glu-561–Glu-578. The tract at residues Ser-517 to Glu-578 is disordered.

The protein belongs to the DEAD box helicase family. DDX52/ROK1 subfamily. Interacts with the U3 snoRNA and is associated with the 90S and 40S pre-ribosomes.

Its subcellular location is the nucleus. It localises to the nucleolus. It carries out the reaction ATP + H2O = ADP + phosphate + H(+). Functionally, ATP-dependent RNA helicase involved in 40S ribosomal subunit biogenesis. Required for the processing and cleavage of 35S pre-rRNA at sites A0, A1, and A2, leading to mature 18S rRNA. This is ATP-dependent RNA helicase CHR1 (CHR1) from Candida albicans (strain SC5314 / ATCC MYA-2876) (Yeast).